We begin with the raw amino-acid sequence, 406 residues long: Putative nickel insertion protein (406 aa).

This sequence belongs to the LarC family.

This is Putative nickel insertion protein from Thermomicrobium roseum (strain ATCC 27502 / DSM 5159 / P-2).